The chain runs to 56 residues: Large ribosomal subunit protein bL32 (56 aa).

A disordered region spans residues methionine 1–glutamate 35. The segment covering threonine 9 to leucine 22 has biased composition (basic residues).

This sequence belongs to the bacterial ribosomal protein bL32 family.

The polypeptide is Large ribosomal subunit protein bL32 (Blochmanniella pennsylvanica (strain BPEN)).